The chain runs to 265 residues: Acetylglutamate kinase (265 aa).

Substrate-binding positions include 41–42 (GG), R63, and N156.

It belongs to the acetylglutamate kinase family. ArgB subfamily.

Its subcellular location is the cytoplasm. It catalyses the reaction N-acetyl-L-glutamate + ATP = N-acetyl-L-glutamyl 5-phosphate + ADP. Its pathway is amino-acid biosynthesis; L-arginine biosynthesis; N(2)-acetyl-L-ornithine from L-glutamate: step 2/4. In terms of biological role, catalyzes the ATP-dependent phosphorylation of N-acetyl-L-glutamate. This is Acetylglutamate kinase from Oceanobacillus iheyensis (strain DSM 14371 / CIP 107618 / JCM 11309 / KCTC 3954 / HTE831).